The following is a 430-amino-acid chain: 3-phosphoshikimate 1-carboxyvinyltransferase (430 aa).

3 residues coordinate 3-phosphoshikimate: lysine 21, serine 22, and arginine 26. Phosphoenolpyruvate is bound at residue lysine 21. The phosphoenolpyruvate site is built by glycine 92 and arginine 120. Residues serine 165, serine 166, glutamine 167, serine 193, aspartate 314, and lysine 341 each coordinate 3-phosphoshikimate. Residue glutamine 167 coordinates phosphoenolpyruvate. The Proton acceptor role is filled by aspartate 314. Phosphoenolpyruvate-binding residues include arginine 345, arginine 386, and lysine 411.

It belongs to the EPSP synthase family. As to quaternary structure, monomer.

The protein localises to the cytoplasm. It carries out the reaction 3-phosphoshikimate + phosphoenolpyruvate = 5-O-(1-carboxyvinyl)-3-phosphoshikimate + phosphate. The protein operates within metabolic intermediate biosynthesis; chorismate biosynthesis. In terms of biological role, catalyzes the transfer of the enolpyruvyl moiety of phosphoenolpyruvate (PEP) to the 5-hydroxyl of shikimate-3-phosphate (S3P) to produce enolpyruvyl shikimate-3-phosphate and inorganic phosphate. This Methanospirillum hungatei JF-1 (strain ATCC 27890 / DSM 864 / NBRC 100397 / JF-1) protein is 3-phosphoshikimate 1-carboxyvinyltransferase.